Here is a 346-residue protein sequence, read N- to C-terminus: Dihydroorotate dehydrogenase (quinone) (346 aa).

FMN is bound by residues 61–65 (AGLDK) and Thr-85. Substrate is bound at residue Lys-65. A substrate-binding site is contributed by 110–114 (NRMGF). Asn-138 and Asn-171 together coordinate FMN. Asn-171 contacts substrate. Catalysis depends on Ser-174, which acts as the Nucleophile. Residue Asn-176 coordinates substrate. 2 residues coordinate FMN: Lys-216 and Thr-244. 245–246 (NT) provides a ligand contact to substrate. Residues Gly-267, Gly-296, and 317–318 (YS) contribute to the FMN site.

This sequence belongs to the dihydroorotate dehydrogenase family. Type 2 subfamily. In terms of assembly, monomer. Requires FMN as cofactor.

Its subcellular location is the cell membrane. It carries out the reaction (S)-dihydroorotate + a quinone = orotate + a quinol. The protein operates within pyrimidine metabolism; UMP biosynthesis via de novo pathway; orotate from (S)-dihydroorotate (quinone route): step 1/1. Catalyzes the conversion of dihydroorotate to orotate with quinone as electron acceptor. The chain is Dihydroorotate dehydrogenase (quinone) from Marinomonas sp. (strain MWYL1).